Here is a 223-residue protein sequence, read N- to C-terminus: Agamous-like MADS-box protein AGL11 (223 aa).

The 61-residue stretch at 1–61 (MGRGKIEIKR…GRVYEYSNNN (61 aa)) folds into the MADS-box domain. The region spanning 87-177 (AQYYQQESAK…RTKIAEVERL (91 aa)) is the K-box domain.

It localises to the nucleus. Probable transcription factor involved in seed development. In Vitis vinifera (Grape), this protein is Agamous-like MADS-box protein AGL11.